The primary structure comprises 427 residues: MSQSDILYSQAKQLIPGGVNSPVRAFNGVGGTPLFIKHADGAYLYDVDGKAYIDYVGSWGPMVLGHNHSAIRNAVIKAAEQGLSFGAPTAAEVEMAQLVTELVPSMDMVRMVNSGTEATMSAIRLARGYTHRDKIIKFEGCYHGHADCLLVKAGSGALTIGQPNSPGVPVDFVKHTLTCTYNDLSSVREAFEQYPQEIACIIVEPVAGNMNCVPPQPEFLPGLRALCDEFGALLIIDEVMTGFRVALSGAQSYYDVEPDITCLGKIIGGGMPVGAFGGRYEVMEKLAPIGPVYQAGTLSGNPIAMAAGLACLKEVSQPGVHQRLTELTDNLAAGLTKSAKAANIPLVVNHVGGMFGIFFTDAETVTCYQDVMNCDIERFKHFFHLMLDEGVYLAPSAFEAGFMSIAHTDEDIQRTVNAAARCFAKLK.

Position 265 is an N6-(pyridoxal phosphate)lysine (lysine 265).

The protein belongs to the class-III pyridoxal-phosphate-dependent aminotransferase family. HemL subfamily. As to quaternary structure, homodimer. It depends on pyridoxal 5'-phosphate as a cofactor.

It localises to the cytoplasm. It carries out the reaction (S)-4-amino-5-oxopentanoate = 5-aminolevulinate. It participates in porphyrin-containing compound metabolism; protoporphyrin-IX biosynthesis; 5-aminolevulinate from L-glutamyl-tRNA(Glu): step 2/2. The protein is Glutamate-1-semialdehyde 2,1-aminomutase of Photorhabdus laumondii subsp. laumondii (strain DSM 15139 / CIP 105565 / TT01) (Photorhabdus luminescens subsp. laumondii).